A 261-amino-acid chain; its full sequence is MTHQTHAYHMVNPSPWPLTGALSALLMTSGLIMWFHFNSMYLLMLGLTTNTLTMYQWWRDIVRESTFQGHHTPIVQKGLRYGMILFIVSEVFFFAGFFWAFYHSSLAPTPELGGCWPPTGITPLNPMEVPLLNTSVLLASGVSITWAHHSLMEGNRKHMLQALFITISLGIYFTLLQASEYYETPFTISDGIYGSTFFMATGFHGLHVIIGSTFLIVCFVRQLKFHFTSNHHFGFEAAAWYWHFVDVVWLFLYVSIYWWGS.

The Mitochondrial matrix segment spans residues 1-15 (MTHQTHAYHMVNPSP). A helical transmembrane segment spans residues 16–34 (WPLTGALSALLMTSGLIMW). Residues 35 to 40 (FHFNSM) lie on the Mitochondrial intermembrane side of the membrane. Residues 41-66 (YLLMLGLTTNTLTMYQWWRDIVREST) form a helical membrane-spanning segment. The Mitochondrial matrix portion of the chain corresponds to 67–72 (FQGHHT). The helical transmembrane segment at 73 to 105 (PIVQKGLRYGMILFIVSEVFFFAGFFWAFYHSS) threads the bilayer. The Mitochondrial intermembrane portion of the chain corresponds to 106-128 (LAPTPELGGCWPPTGITPLNPME). A helical transmembrane segment spans residues 129–152 (VPLLNTSVLLASGVSITWAHHSLM). At 153-155 (EGN) the chain is on the mitochondrial matrix side. A helical transmembrane segment spans residues 156–183 (RKHMLQALFITISLGIYFTLLQASEYYE). Residues 184–190 (TPFTISD) are Mitochondrial intermembrane-facing. A helical membrane pass occupies residues 191–223 (GIYGSTFFMATGFHGLHVIIGSTFLIVCFVRQL). The Mitochondrial matrix portion of the chain corresponds to 224–232 (KFHFTSNHH). A helical membrane pass occupies residues 233–256 (FGFEAAAWYWHFVDVVWLFLYVSI). The Mitochondrial intermembrane segment spans residues 257–261 (YWWGS).

Belongs to the cytochrome c oxidase subunit 3 family. As to quaternary structure, component of the cytochrome c oxidase (complex IV, CIV), a multisubunit enzyme composed of 14 subunits. The complex is composed of a catalytic core of 3 subunits MT-CO1, MT-CO2 and MT-CO3, encoded in the mitochondrial DNA, and 11 supernumerary subunits COX4I, COX5A, COX5B, COX6A, COX6B, COX6C, COX7A, COX7B, COX7C, COX8 and NDUFA4, which are encoded in the nuclear genome. The complex exists as a monomer or a dimer and forms supercomplexes (SCs) in the inner mitochondrial membrane with NADH-ubiquinone oxidoreductase (complex I, CI) and ubiquinol-cytochrome c oxidoreductase (cytochrome b-c1 complex, complex III, CIII), resulting in different assemblies (supercomplex SCI(1)III(2)IV(1) and megacomplex MCI(2)III(2)IV(2)).

The protein resides in the mitochondrion inner membrane. The enzyme catalyses 4 Fe(II)-[cytochrome c] + O2 + 8 H(+)(in) = 4 Fe(III)-[cytochrome c] + 2 H2O + 4 H(+)(out). In terms of biological role, component of the cytochrome c oxidase, the last enzyme in the mitochondrial electron transport chain which drives oxidative phosphorylation. The respiratory chain contains 3 multisubunit complexes succinate dehydrogenase (complex II, CII), ubiquinol-cytochrome c oxidoreductase (cytochrome b-c1 complex, complex III, CIII) and cytochrome c oxidase (complex IV, CIV), that cooperate to transfer electrons derived from NADH and succinate to molecular oxygen, creating an electrochemical gradient over the inner membrane that drives transmembrane transport and the ATP synthase. Cytochrome c oxidase is the component of the respiratory chain that catalyzes the reduction of oxygen to water. Electrons originating from reduced cytochrome c in the intermembrane space (IMS) are transferred via the dinuclear copper A center (CU(A)) of subunit 2 and heme A of subunit 1 to the active site in subunit 1, a binuclear center (BNC) formed by heme A3 and copper B (CU(B)). The BNC reduces molecular oxygen to 2 water molecules using 4 electrons from cytochrome c in the IMS and 4 protons from the mitochondrial matrix. The chain is Cytochrome c oxidase subunit 3 (MT-CO3) from Phoca vitulina (Harbor seal).